The following is a 462-amino-acid chain: Asparagine--tRNA ligase (462 aa).

This sequence belongs to the class-II aminoacyl-tRNA synthetase family. As to quaternary structure, homodimer.

It localises to the cytoplasm. It carries out the reaction tRNA(Asn) + L-asparagine + ATP = L-asparaginyl-tRNA(Asn) + AMP + diphosphate + H(+). This Borrelia garinii subsp. bavariensis (strain ATCC BAA-2496 / DSM 23469 / PBi) (Borreliella bavariensis) protein is Asparagine--tRNA ligase.